The chain runs to 258 residues: Acyl-[acyl-carrier-protein]--UDP-N-acetylglucosamine O-acyltransferase (258 aa).

The protein belongs to the transferase hexapeptide repeat family. LpxA subfamily. In terms of assembly, homotrimer.

The protein resides in the cytoplasm. The enzyme catalyses a (3R)-hydroxyacyl-[ACP] + UDP-N-acetyl-alpha-D-glucosamine = a UDP-3-O-[(3R)-3-hydroxyacyl]-N-acetyl-alpha-D-glucosamine + holo-[ACP]. It participates in glycolipid biosynthesis; lipid IV(A) biosynthesis; lipid IV(A) from (3R)-3-hydroxytetradecanoyl-[acyl-carrier-protein] and UDP-N-acetyl-alpha-D-glucosamine: step 1/6. Functionally, involved in the biosynthesis of lipid A, a phosphorylated glycolipid that anchors the lipopolysaccharide to the outer membrane of the cell. This is Acyl-[acyl-carrier-protein]--UDP-N-acetylglucosamine O-acyltransferase from Pseudomonas aeruginosa (strain LESB58).